Here is a 254-residue protein sequence, read N- to C-terminus: Short-chain dehydrogenase/reductase SDRA (254 aa).

Residue 15–39 participates in NADP(+) binding; sequence IVTASTQGIGFGITERFGLEGASVV. Position 146 (Ser-146) interacts with substrate. Tyr-159 functions as the Proton acceptor in the catalytic mechanism. Residues 252–254 carry the Microbody targeting signal motif; it reads SRL.

This sequence belongs to the short-chain dehydrogenases/reductases (SDR) family.

The protein resides in the peroxisome. Functionally, involved with IBR3 and IBR10 in the peroxisomal beta-oxidation of indole-3-butyric acid (IBA) to form indole-3-acetic acid (IAA), a biologically active auxin. May be responsible for catalyzing the dehydrogenation step in the conversion of IBA. May be involved in the peroxisomal activation of 2,4-dichlorophenoxybutyric acid (2,4-DB), a precursor of active auxins that inhibit root growth. The protein is Short-chain dehydrogenase/reductase SDRA of Arabidopsis thaliana (Mouse-ear cress).